Here is a 470-residue protein sequence, read N- to C-terminus: 3-isopropylmalate dehydratase large subunit (470 aa).

The [4Fe-4S] cluster site is built by Cys349, Cys409, and Cys412.

This sequence belongs to the aconitase/IPM isomerase family. LeuC type 1 subfamily. Heterodimer of LeuC and LeuD. Requires [4Fe-4S] cluster as cofactor.

It carries out the reaction (2R,3S)-3-isopropylmalate = (2S)-2-isopropylmalate. Its pathway is amino-acid biosynthesis; L-leucine biosynthesis; L-leucine from 3-methyl-2-oxobutanoate: step 2/4. Catalyzes the isomerization between 2-isopropylmalate and 3-isopropylmalate, via the formation of 2-isopropylmaleate. The chain is 3-isopropylmalate dehydratase large subunit from Campylobacter jejuni subsp. jejuni serotype O:2 (strain ATCC 700819 / NCTC 11168).